A 464-amino-acid chain; its full sequence is Cell division protein FtsA (464 aa).

A disordered region spans residues 392–464 (EVIETDKDTE…FKKLMKSLFE (73 aa)). Residues 416-455 (KKENDEVAPEAPREESYEDRENHLEDEQQTEGKAKEESKF) show a composition bias toward basic and acidic residues.

Belongs to the FtsA/MreB family. In terms of assembly, self-interacts. Interacts with FtsZ.

The protein localises to the cell membrane. Its function is as follows. Cell division protein that is involved in the assembly of the Z ring. May serve as a membrane anchor for the Z ring. In Staphylococcus epidermidis (strain ATCC 12228 / FDA PCI 1200), this protein is Cell division protein FtsA.